A 252-amino-acid polypeptide reads, in one-letter code: Aspartate/glutamate leucyltransferase (252 aa).

It belongs to the R-transferase family. Bpt subfamily.

It is found in the cytoplasm. The enzyme catalyses N-terminal L-glutamyl-[protein] + L-leucyl-tRNA(Leu) = N-terminal L-leucyl-L-glutamyl-[protein] + tRNA(Leu) + H(+). The catalysed reaction is N-terminal L-aspartyl-[protein] + L-leucyl-tRNA(Leu) = N-terminal L-leucyl-L-aspartyl-[protein] + tRNA(Leu) + H(+). In terms of biological role, functions in the N-end rule pathway of protein degradation where it conjugates Leu from its aminoacyl-tRNA to the N-termini of proteins containing an N-terminal aspartate or glutamate. This Agrobacterium fabrum (strain C58 / ATCC 33970) (Agrobacterium tumefaciens (strain C58)) protein is Aspartate/glutamate leucyltransferase.